Here is a 529-residue protein sequence, read N- to C-terminus: FAD-binding monooxygenase BOA2 (529 aa).

FAD is bound by residues valine 58–lysine 61, aspartate 70–isoleucine 71, and tyrosine 76. Alanine 68 to aspartate 70 serves as a coordination point for NADP(+). NADP(+) contacts are provided by residues threonine 198–glutamine 204 and arginine 221–serine 222.

Belongs to the FAD-binding monooxygenase family. Requires FAD as cofactor.

It participates in polyketide biosynthesis. FAD-binding monooxygenase; part of the gene cluster A that mediates the biosynthesis of botcinic acid and its botcinin derivatives, acetate-derived polyketides that contribute to virulence when combined with the sesquiterpene botrydial. Botcinic acid and its derivatives have been shown to induce chlorosis and necrosis during host plant infection, but also have antifungal activities. Two polyketide synthases, BOA6 and BOA9, are involved in the biosynthesis of botcinins. BOA6 mediates the formation of the per-methylated tetraketide core by condensation of four units of malonyl-CoA with one unit of acetyl-CoA, which would be methylated in activated methylene groups to yield a bicyclic acid intermediate that could then either be converted to botrylactone derivatives or lose the starter acetate unit through a retro-Claisen type C-C bond cleavage to yield botcinin derivatives. The second polyketide synthase, BOA9, is probably required for the biosynthesis of the tetraketide side chain of botcinins. The methyltransferase (MT) domain within BOA6 is probably responsible for the incorporation of four methyl groups. The trans-enoyl reductase BOA5 might take over the enoyl reductase function of BOA6 that misses an ER domain. The monooxygenases BOA2, BOA3 and BOA4 might be involved in further hydroxylations at C4, C5 and C8, whereas BOA7, close to BOA9, could potentially be involved in the hydroxylation at C4 in the side chain of botcinins. The sequence is that of FAD-binding monooxygenase BOA2 from Botryotinia fuckeliana (strain B05.10) (Noble rot fungus).